The following is a 326-amino-acid chain: Protein GVP36 (326 aa).

Serine 2 carries the post-translational modification N-acetylserine. The residue at position 2 (serine 2) is a Phosphoserine. Glycyl lysine isopeptide (Lys-Gly) (interchain with G-Cter in ubiquitin) cross-links involve residues lysine 13, lysine 305, and lysine 313. A disordered region spans residues 299–326 (AEEPEAKPEVAEEEKPQTAISMNDEDDA). Positions 302–314 (PEAKPEVAEEEKP) are enriched in basic and acidic residues. The residue at position 319 (serine 319) is a Phosphoserine.

The protein localises to the golgi apparatus membrane. The sequence is that of Protein GVP36 (GVP36) from Saccharomyces cerevisiae (strain ATCC 204508 / S288c) (Baker's yeast).